The sequence spans 345 residues: NADPH dehydrogenase (345 aa).

23–26 serves as a coordination point for FMN; that stretch reads SPMC. Substrate is bound at residue Tyr28. Residues Ala60 and Gln102 each contribute to the FMN site. 164–167 is a substrate binding site; the sequence is HGAH. Residues Arg215 and 307-308 contribute to the FMN site; that span reads GR.

The protein belongs to the NADH:flavin oxidoreductase/NADH oxidase family. NamA subfamily. Homotetramer. FMN is required as a cofactor.

The catalysed reaction is A + NADPH + H(+) = AH2 + NADP(+). Its function is as follows. Catalyzes the reduction of the double bond of an array of alpha,beta-unsaturated aldehydes and ketones. It also reduces the nitro group of nitroester and nitroaromatic compounds. It could have a role in detoxification processes. The sequence is that of NADPH dehydrogenase from Bacillus cereus (strain AH187).